The following is a 209-amino-acid chain: MDTNHPGSAGGRGGLGSIFGGGSPGYSHSDLAGVPLTGMSPLSPYLNVDPRYLVQDNDEFILPTGANKTRGRFELAFFTIGGCCMSGAAFGAVNGLRLGFKETQNMAWSKPKNVQILNMVTRQGALWANTLGSLALLYSAFGVIIEKTRGAEDDLNTIAAGTMTGMLYKSTGGLRGVARGGLAGLALTSAFALYNNWEHIKGSSSRLSL.

The next 3 helical transmembrane spans lie at 73–93, 125–145, and 180–200; these read FELA…FGAV, ALWA…GVII, and GGLA…WEHI.

This sequence belongs to the Tim17/Tim22/Tim23 family. Component of the TIM23 complex at least composed of timm23, timm17 and timm50. The complex interacts with the timm44 component of the PAM complex.

The protein localises to the mitochondrion inner membrane. Its function is as follows. Essential component of the TIM23 complex, a complex that mediates the translocation of transit peptide-containing proteins across the mitochondrial inner membrane. The polypeptide is Mitochondrial import inner membrane translocase subunit Tim23 (timm23) (Xenopus tropicalis (Western clawed frog)).